A 982-amino-acid chain; its full sequence is Mitochondrial DNA mismatch repair protein mutS homolog (982 aa).

698–705 serves as a coordination point for ATP; it reads SVNGAGKS. The HNH domain maps to 905–951; it reads CEICGAPADAVHHIKPKSEHKKLCNRKLNRRSNLVPVCSSCHLDIHR.

Belongs to the DNA mismatch repair MutS family.

The protein resides in the mitochondrion. Functionally, may be involved in DNA-mismatch repair. The chain is Mitochondrial DNA mismatch repair protein mutS homolog from Sarcophyton glaucum (Toadstool umbrella leather coral).